Reading from the N-terminus, the 260-residue chain is Outer membrane protein assembly factor BamD (260 aa).

Positions 1-19 are cleaved as a signal peptide; it reads MRKLKSFTFIALTAFAITA. Cys20 carries the N-palmitoyl cysteine lipid modification. A lipid anchor (S-diacylglycerol cysteine) is attached at Cys20.

The protein belongs to the BamD family. As to quaternary structure, part of the Bam complex.

The protein resides in the cell outer membrane. Its function is as follows. Part of the outer membrane protein assembly complex, which is involved in assembly and insertion of beta-barrel proteins into the outer membrane. The chain is Outer membrane protein assembly factor BamD from Pasteurella multocida (strain Pm70).